The sequence spans 145 residues: Transcription antitermination protein NusB (145 aa).

This sequence belongs to the NusB family.

In terms of biological role, involved in transcription antitermination. Required for transcription of ribosomal RNA (rRNA) genes. Binds specifically to the boxA antiterminator sequence of the ribosomal RNA (rrn) operons. This Acetivibrio thermocellus (strain ATCC 27405 / DSM 1237 / JCM 9322 / NBRC 103400 / NCIMB 10682 / NRRL B-4536 / VPI 7372) (Clostridium thermocellum) protein is Transcription antitermination protein NusB.